We begin with the raw amino-acid sequence, 419 residues long: RNA polymerase sigma factor sigD, chloroplastic (419 aa).

A chloroplast-targeting transit peptide spans 1–52 (MATTIPTTATATMCPSPPVPTISPLLRTTHQCQPSPSLSSPFSIKLSTALVC). Residues 207 to 220 (DLIQEGSIGLLRGA) carry the Polymerase core binding motif. Residues 377-396 (FEEIGKSLKLSRERVRQING) constitute a DNA-binding region (H-T-H motif).

Belongs to the sigma-70 factor family. In terms of tissue distribution, mostly expressed in leaves, and to a lesser extent in roots. Present in seedlings.

It localises to the plastid. The protein resides in the chloroplast. Sigma factors are initiation factors that promote the attachment of plastid-encoded RNA polymerase (PEP) to specific initiation sites and are then released. Regulates transcription of the ndhF gene which codes for a subunit of the plastid NDH [NAD(P)H dehydrogenase] complex. This is RNA polymerase sigma factor sigD, chloroplastic (SIGD) from Arabidopsis thaliana (Mouse-ear cress).